The primary structure comprises 311 residues: Aspartate carbamoyltransferase catalytic subunit (311 aa).

Residues R55 and T56 each coordinate carbamoyl phosphate. K85 contacts L-aspartate. 3 residues coordinate carbamoyl phosphate: R106, H135, and Q138. L-aspartate contacts are provided by R168 and R230. The carbamoyl phosphate site is built by L268 and P269.

The protein belongs to the aspartate/ornithine carbamoyltransferase superfamily. ATCase family. As to quaternary structure, heterododecamer (2C3:3R2) of six catalytic PyrB chains organized as two trimers (C3), and six regulatory PyrI chains organized as three dimers (R2).

The enzyme catalyses carbamoyl phosphate + L-aspartate = N-carbamoyl-L-aspartate + phosphate + H(+). It participates in pyrimidine metabolism; UMP biosynthesis via de novo pathway; (S)-dihydroorotate from bicarbonate: step 2/3. Catalyzes the condensation of carbamoyl phosphate and aspartate to form carbamoyl aspartate and inorganic phosphate, the committed step in the de novo pyrimidine nucleotide biosynthesis pathway. This chain is Aspartate carbamoyltransferase catalytic subunit, found in Klebsiella pneumoniae subsp. pneumoniae (strain ATCC 700721 / MGH 78578).